An 82-amino-acid polypeptide reads, in one-letter code: Acyl carrier protein (82 aa).

The 76-residue stretch at 4–79 (PEMEARLKQI…DALNYIEQKL (76 aa)) folds into the Carrier domain. The residue at position 39 (Ser-39) is an O-(pantetheine 4'-phosphoryl)serine.

The protein belongs to the acyl carrier protein (ACP) family. Post-translationally, 4'-phosphopantetheine is transferred from CoA to a specific serine of apo-ACP by AcpS. This modification is essential for activity because fatty acids are bound in thioester linkage to the sulfhydryl of the prosthetic group.

The protein resides in the cytoplasm. The protein operates within lipid metabolism; fatty acid biosynthesis. Functionally, carrier of the growing fatty acid chain in fatty acid biosynthesis. The protein is Acyl carrier protein of Roseiflexus castenholzii (strain DSM 13941 / HLO8).